The following is a 362-amino-acid chain: Biotin synthase (362 aa).

The tract at residues 14–39 is disordered; the sequence is AQRTPEPLPPTSQGLARPSHDVVRGP. The Radical SAM core domain occupies 87-316; sequence HKGGPAALCG…ARDILVCGGR (230 aa). [4Fe-4S] cluster is bound by residues C105, C109, and C112. [2Fe-2S] cluster contacts are provided by C181 and C241.

The protein belongs to the radical SAM superfamily. Biotin synthase family. In terms of assembly, homodimer. [4Fe-4S] cluster serves as cofactor. It depends on [2Fe-2S] cluster as a cofactor.

The enzyme catalyses (4R,5S)-dethiobiotin + (sulfur carrier)-SH + 2 reduced [2Fe-2S]-[ferredoxin] + 2 S-adenosyl-L-methionine = (sulfur carrier)-H + biotin + 2 5'-deoxyadenosine + 2 L-methionine + 2 oxidized [2Fe-2S]-[ferredoxin]. The protein operates within cofactor biosynthesis; biotin biosynthesis; biotin from 7,8-diaminononanoate: step 2/2. In terms of biological role, catalyzes the conversion of dethiobiotin (DTB) to biotin by the insertion of a sulfur atom into dethiobiotin via a radical-based mechanism. This is Biotin synthase from Nitratidesulfovibrio vulgaris (strain ATCC 29579 / DSM 644 / CCUG 34227 / NCIMB 8303 / VKM B-1760 / Hildenborough) (Desulfovibrio vulgaris).